A 224-amino-acid polypeptide reads, in one-letter code: Putative adhesin A1G_07050 (224 aa).

Residues 1-22 form the signal peptide; it reads MKKLLLIAATSATILSSSVSFA.

This Rickettsia rickettsii (strain Sheila Smith) protein is Putative adhesin A1G_07050.